Reading from the N-terminus, the 56-residue chain is Ovomucoid (56 aa).

Positions 6–56 (VDCSEYPKPDCTLEYRPLCGSDNKTYASKCNFCNAVVESNGTLTLSHFGKC) constitute a Kazal-like domain. Disulfide bonds link Cys8–Cys38, Cys16–Cys35, and Cys24–Cys56. Asn45 carries an N-linked (GlcNAc...) asparagine glycan.

It is found in the secreted. The sequence is that of Ovomucoid from Callipepla squamata pallida (Blue scaled quail).